A 240-amino-acid polypeptide reads, in one-letter code: Extracellular superoxide dismutase [Cu-Zn] (240 aa).

An N-terminal signal peptide occupies residues 1–18 (MLALLCSCLLLAAGASDA). Intrachain disulfides connect cysteine 63/cysteine 208 and cysteine 125/cysteine 207. The N-linked (GlcNAc...) asparagine glycan is linked to asparagine 107. Cu cation is bound by residues histidine 114, histidine 116, and histidine 131. Residues histidine 131, histidine 139, histidine 142, and aspartate 145 each coordinate Zn(2+). Histidine 181 lines the Cu cation pocket. 2 N-linked (Glc) (glycation) lysine; in vitro glycosylation sites follow: lysine 229 and lysine 230.

It belongs to the Cu-Zn superoxide dismutase family. As to quaternary structure, homotetramer. Directly interacts with ATP7A; this interaction is copper-dependent and is required for SOD3 activity. Requires Cu cation as cofactor. The cofactor is Zn(2+). Expressed in blood vessels, heart, lung, kidney and placenta. Major SOD isoenzyme in extracellular fluids such as plasma, lymph and synovial fluid.

It is found in the secreted. The protein resides in the extracellular space. It localises to the golgi apparatus. Its subcellular location is the trans-Golgi network. It catalyses the reaction 2 superoxide + 2 H(+) = H2O2 + O2. Functionally, protect the extracellular space from toxic effect of reactive oxygen intermediates by converting superoxide radicals into hydrogen peroxide and oxygen. The chain is Extracellular superoxide dismutase [Cu-Zn] (SOD3) from Homo sapiens (Human).